The sequence spans 89 residues: Probable Fe(2+)-trafficking protein (89 aa).

Belongs to the Fe(2+)-trafficking protein family.

In terms of biological role, could be a mediator in iron transactions between iron acquisition and iron-requiring processes, such as synthesis and/or repair of Fe-S clusters in biosynthetic enzymes. The polypeptide is Probable Fe(2+)-trafficking protein (Acinetobacter baumannii (strain AB0057)).